Consider the following 149-residue polypeptide: Large ribosomal subunit protein bL9 (149 aa).

Belongs to the bacterial ribosomal protein bL9 family.

Binds to the 23S rRNA. The polypeptide is Large ribosomal subunit protein bL9 (Geobacillus kaustophilus (strain HTA426)).